We begin with the raw amino-acid sequence, 612 residues long: Beta-mannosyltransferase 5 (612 aa).

At 1–12 (MVQKQYRFAPKS) the chain is on the cytoplasmic side. The chain crosses the membrane as a helical span at residues 13–33 (IFTFVFLCFVAIVVIISTSSL). Over 34–612 (VQVEESLDPI…YRAHLKRWQN (579 aa)) the chain is Extracellular. N-linked (GlcNAc...) asparagine glycans are attached at residues Asn224, Asn230, and Asn480.

This sequence belongs to the BMT family.

The protein localises to the membrane. In terms of biological role, beta-mannosyltransferase involved in cell wall biosynthesis. Required for beta-1,2-mannose transfer on phospholipomannan. The chain is Beta-mannosyltransferase 5 (BMT5) from Candida albicans (strain SC5314 / ATCC MYA-2876) (Yeast).